We begin with the raw amino-acid sequence, 161 residues long: Bacterioferritin (161 aa).

Positions 1–145 (MKGDAKVIEF…TQISLYDRLG (145 aa)) constitute a Ferritin-like diiron domain. Fe cation is bound by residues E18 and E51. M52 serves as a coordination point for heme b. H54, E94, E127, and H130 together coordinate Fe cation.

It belongs to the bacterioferritin family. Homooligomer of 24 subunits, arranged as 12 dimers, that are packed together to form an approximately spherical molecule with a central cavity, in which large amounts of iron can be deposited. It depends on heme b as a cofactor.

The enzyme catalyses 4 Fe(2+) + O2 + 4 H(+) = 4 Fe(3+) + 2 H2O. It catalyses the reaction Fe(2+)(in) = Fe(2+)(out). Its function is as follows. Iron-storage protein, whose ferroxidase center binds Fe(2+), oxidizes it using dioxygen to Fe(3+), and participates in the subsequent Fe(3+) oxide mineral core formation within the central cavity of the BFR protein shell. This Rhodobacter capsulatus (Rhodopseudomonas capsulata) protein is Bacterioferritin (bfr).